The sequence spans 543 residues: Bifunctional riboflavin biosynthesis protein RIBA 1, chloroplastic (543 aa).

A chloroplast-targeting transit peptide spans 1 to 56 (MSSINLSSSSPSTISLSRSRLSQSSTTLLHGLHRVTLPSNHPLSTFSIKTNTGKVK). The DHBP synthase stretch occupies residues 57–328 (AAVISREDDL…IADLIRYRRK (272 aa)). D-ribulose 5-phosphate contacts are provided by residues 152–153 (RE), Asp157, 267–271 (RAGHT), and Glu291. Position 153 (Glu153) interacts with Mg(2+). His270 serves as a coordination point for Mg(2+). The GTP cyclohydrolase II stretch occupies residues 329–543 (RDKLVERASA…VEKIESESES (215 aa)). GTP is bound at residue 379-383 (RVHSE). Residues Cys384, Cys395, and Cys397 each contribute to the Zn(2+) site. GTP is bound by residues Gln400, 423 to 425 (EGR), and Thr445. Asp457 acts as the Proton acceptor; for GTP cyclohydrolase activity in catalysis. The active-site Nucleophile; for GTP cyclohydrolase activity is Arg459. Thr480 and Lys485 together coordinate GTP.

It in the N-terminal section; belongs to the DHBP synthase family. This sequence in the C-terminal section; belongs to the GTP cyclohydrolase II family. Requires Mg(2+) as cofactor. It depends on Mn(2+) as a cofactor. Zn(2+) serves as cofactor. Expressed in leaves, shoots, roots, flowers and siliques.

The protein localises to the plastid. Its subcellular location is the chloroplast. It catalyses the reaction D-ribulose 5-phosphate = (2S)-2-hydroxy-3-oxobutyl phosphate + formate + H(+). The catalysed reaction is GTP + 4 H2O = 2,5-diamino-6-hydroxy-4-(5-phosphoribosylamino)-pyrimidine + formate + 2 phosphate + 3 H(+). It participates in cofactor biosynthesis; riboflavin biosynthesis; 2-hydroxy-3-oxobutyl phosphate from D-ribulose 5-phosphate: step 1/1. Its pathway is cofactor biosynthesis; riboflavin biosynthesis; 5-amino-6-(D-ribitylamino)uracil from GTP: step 1/4. Involved in riboflavin biosynthesis. Catalyzes both the conversion of D-ribulose 5-phosphate to formate and 3,4-dihydroxy-2-butanone 4-phosphate and the conversion of GTP to 2,5-diamino-6-ribosylamino-4(3H)-pyrimidinone 5'-phosphate (DARP), formate and pyrophosphate. RIBA2 and RIBA3 together are not able to complement the loss of function of RIBA1. The protein is Bifunctional riboflavin biosynthesis protein RIBA 1, chloroplastic (RIBA1) of Arabidopsis thaliana (Mouse-ear cress).